The following is a 431-amino-acid chain: Serine/threonine-protein kinase Sgk1 (431 aa).

Residues 1–60 (MTVKAEAARSTLTYSRMRGMVAILIAFMKQRRMGLNDFIQKIASNTYACKHAEVQSILKM) are necessary for localization to the mitochondria. Positions 65–92 (EPELMNANPSPPPSPSQQINLGPSSNPH) are disordered. The residue at position 74 (Ser74) is a Phosphoserine. Phosphoserine; by MAPK7 is present on Ser78. The segment covering 81-91 (QQINLGPSSNP) has biased composition (polar residues). The Protein kinase domain maps to 98–355 (FHFLKVIGKG…FMEIKSHIFF (258 aa)). ATP-binding positions include 104-112 (IGKGSFGKV) and Lys127. The Nuclear localization signal motif lies at 131 to 141 (KKAILKKKEEK). Asp222 (proton acceptor) is an active-site residue. Thr256 is modified (phosphothreonine; by PDPK1). One can recognise an AGC-kinase C-terminal domain in the interval 356–431 (SLINWDDLIN…SYAPPVDSFL (76 aa)). At Thr369 the chain carries Phosphothreonine; by PKA. A phosphoserine mark is found at Ser397, Ser401, and Ser422.

The protein belongs to the protein kinase superfamily. AGC Ser/Thr protein kinase family. In terms of assembly, homodimer; disulfide-linked. Interacts with MAPK3/ERK1, MAPK1/ERK2, MAP2K1/MEK1, MAP2K2/MEK2, NEDD4, NEDD4L, MAPT/TAU, MAPK7, CREB1, SLC9A3R2/NHERF2 and KCNJ1/ROMK1. Forms a trimeric complex with FBXW7 and NOTCH1 Associates with the mammalian target of rapamycin complex 2 (mTORC2) via an interaction with MAPKAP1/SIN1. In terms of processing, regulated by phosphorylation. Activated by phosphorylation on Ser-422 by mTORC2, transforming it into a substrate for PDPK1 which phosphorylates it on Thr-256. Phosphorylation on Ser-397 and Ser-401 are also essential for its activity. Phosphorylation on Ser-78 by MAPK7 is required for growth factor-induced cell cycle progression. Ubiquitinated by NEDD4L; which promotes proteasomal degradation. Ubiquitinated by SYVN1 at the endoplasmic reticulum; which promotes rapid proteasomal degradation and maintains a high turnover rate in resting cells.

It is found in the cytoplasm. Its subcellular location is the nucleus. It localises to the endoplasmic reticulum membrane. The protein localises to the cell membrane. The protein resides in the mitochondrion. The enzyme catalyses L-seryl-[protein] + ATP = O-phospho-L-seryl-[protein] + ADP + H(+). It carries out the reaction L-threonyl-[protein] + ATP = O-phospho-L-threonyl-[protein] + ADP + H(+). Its activity is regulated as follows. Two specific sites, one in the kinase domain (Thr-256) and the other in the C-terminal regulatory region (Ser-422), need to be phosphorylated for its full activation. Phosphorylation at Ser-397 and Ser-401 are also essential for its activity. Activated by WNK1, WNK2, WNK3 and WNK4; which promote phosphorylation by mTORC2. Serine/threonine-protein kinase which is involved in the regulation of a wide variety of ion channels, membrane transporters, cellular enzymes, transcription factors, neuronal excitability, cell growth, proliferation, survival, migration and apoptosis. Plays an important role in cellular stress response. Contributes to regulation of renal Na(+) retention, renal K(+) elimination, salt appetite, gastric acid secretion, intestinal Na(+)/H(+) exchange and nutrient transport, insulin-dependent salt sensitivity of blood pressure, salt sensitivity of peripheral glucose uptake, cardiac repolarization and memory consolidation. Up-regulates Na(+) channels: SCNN1A/ENAC, SCN5A and ASIC1/ACCN2, K(+) channels: KCNJ1/ROMK1, KCNA1-5, KCNQ1-5 and KCNE1, epithelial Ca(2+) channels: TRPV5 and TRPV6, chloride channels: BSND, CLCN2 and CFTR, glutamate transporters: SLC1A3/EAAT1, SLC1A2 /EAAT2, SLC1A1/EAAT3, SLC1A6/EAAT4 and SLC1A7/EAAT5, amino acid transporters: SLC1A5/ASCT2, SLC38A1/SN1 and SLC6A19, creatine transporter: SLC6A8, Na(+)/dicarboxylate cotransporter: SLC13A2/NADC1, Na(+)-dependent phosphate cotransporter: SLC34A2/NAPI-2B, glutamate receptor: GRIK2/GLUR6. Up-regulates carriers: SLC9A3/NHE3, SLC12A1/NKCC2, SLC12A3/NCC, SLC5A3/SMIT, SLC2A1/GLUT1, SLC5A1/SGLT1 and SLC15A2/PEPT2. Regulates enzymes: GSK3A/B, PMM2 and Na(+)/K(+) ATPase, and transcription factors: CTNNB1 and nuclear factor NF-kappa-B. Stimulates sodium transport into epithelial cells by enhancing the stability and expression of SCNN1A/ENAC. This is achieved by phosphorylating the NEDD4L ubiquitin E3 ligase, promoting its interaction with 14-3-3 proteins, thereby preventing it from binding to SCNN1A/ENAC and targeting it for degradation. Regulates store-operated Ca(+2) entry (SOCE) by stimulating ORAI1 and STIM1. Regulates KCNJ1/ROMK1 directly via its phosphorylation or indirectly via increased interaction with SLC9A3R2/NHERF2. Phosphorylates MDM2 and activates MDM2-dependent ubiquitination of p53/TP53. Phosphorylates MAPT/TAU and mediates microtubule depolymerization and neurite formation in hippocampal neurons. Phosphorylates SLC2A4/GLUT4 and up-regulates its activity. Phosphorylates APBB1/FE65 and promotes its localization to the nucleus. Phosphorylates MAPK1/ERK2 and activates it by enhancing its interaction with MAP2K1/MEK1 and MAP2K2/MEK2. Phosphorylates FBXW7 and plays an inhibitory role in the NOTCH1 signaling. Phosphorylates FOXO1 resulting in its relocalization from the nucleus to the cytoplasm. Phosphorylates FOXO3, promoting its exit from the nucleus and interference with FOXO3-dependent transcription. Phosphorylates BRAF and MAP3K3/MEKK3 and inhibits their activity. Phosphorylates SLC9A3/NHE3 in response to dexamethasone, resulting in its activation and increased localization at the cell membrane. Phosphorylates CREB1. Necessary for vascular remodeling during angiogenesis. The polypeptide is Serine/threonine-protein kinase Sgk1 (Sgk1) (Mus musculus (Mouse)).